We begin with the raw amino-acid sequence, 878 residues long: MASPSSRLLKFITNGSKLHSAKNNNMIKNKNIISPTITKLFSTSKISNEIGNIRNFNNKISTNLINSNINTKPFFEIPKLFEKKYYSYIPPTWEEKDKEKQFNSITSTREEGGDNEESNRMGNGSIKDAIVWVNHLYPIKVSRLDFRSLFFHIPITKKLNSLFPNDVKIISIEKRIKEGGAYIHFQYDSSNPEYKSIEMVMSKLKSIFAQEKKHFHFASRPAKCKLVYGRPFVEDIDYRFPSTTLKITFKGSEMSPDDLFRLMRPYGHIKDIHYSSPIPSKDGPRQATITFKRMEGAIATRNCLHNKYFPEFNTSLYMDYEQLMRINKLKEQFSKHPKIMIPLLGILATLLTLLLFNPLREYFINKKLSSPCYFGEQEEDDWQERSEQKVLQTHFNFPPNSIVMISAPKGSGKSSLIDKVLENRINTLLIDCNQEVNNNDEEFIESFSKDIGFSPSYSLYSSFGSVIDAIIPTGKGAFHSTTNYQMQTILKLLDEVLAKKAKQFPVDPHQPYEYPLIVIDGFFGMIQAMESKEKANIIMDSVIQWAITSTQRGHAHVVFLSSDSFAGDIIKKYLDNRGGGQISTIQLGDVQPSMAINYIKKRIGPNTPITQHDMELVVDNLGGRYYDLNVLSQRMIAGDSVERALSNMISKAVSEIRAEGFGLSKRNDDSKIGGTKLKWSRPQLWETIKKIAENDFVSYDDLLFNVFLGDESSLNNLISSNLLRFQNVDNERKVTAYSPLYCSAFKQMVNDLEFNVGMDVLVQKARIEEELSKLSKVEDELLKIKNLTSKSWFEPLSIKKRRILLEDKLKDHVAKIEHRENILKKHSLFQKFLREEQMIQMELIKKQREQSKFERQQQQLLQQQQLQQQQQQQQQGSI.

At 1–338 the chain is on the mitochondrial matrix side; the sequence is MASPSSRLLK…LKEQFSKHPK (338 aa). Residues 99–120 form a disordered region; sequence EKQFNSITSTREEGGDNEESNR. Residues 229–323 form the RRM domain; it reads GRPFVEDIDY…TSLYMDYEQL (95 aa). Residues 339 to 359 form a helical membrane-spanning segment; that stretch reads IMIPLLGILATLLTLLLFNPL. Over 360-878 the chain is Mitochondrial intermembrane; the sequence is REYFINKKLS…QQQQQQQGSI (519 aa). Residues 761–873 are a coiled coil; the sequence is LVQKARIEEE…QQLQQQQQQQ (113 aa).

Belongs to the YME2 family.

It localises to the mitochondrion inner membrane. In terms of biological role, plays a role in maintaining the mitochondrial genome. May have a dispensable role in early maturation of pre-rRNA. This is Mitochondrial escape protein 2 homolog (yme2) from Dictyostelium discoideum (Social amoeba).